We begin with the raw amino-acid sequence, 150 residues long: UPF0178 protein Rru_A0086 (150 aa).

It belongs to the UPF0178 family.

The chain is UPF0178 protein Rru_A0086 from Rhodospirillum rubrum (strain ATCC 11170 / ATH 1.1.1 / DSM 467 / LMG 4362 / NCIMB 8255 / S1).